The following is a 751-amino-acid chain: SKI family transcriptional corepressor 1 homolog-B (751 aa).

Disordered stretches follow at residues 1 to 30 (MESIPNQLPAGRDSSCSPNSKDLQSYSGPP), 234 to 267 (SRKRTLPIGRSESSPSQPPRGQTQGEPSDVPHKT), 386 to 434 (LDVS…GIPP), 459 to 569 (YGNR…HGNK), and 600 to 635 (QRETSVKDVHEEEPSSTVEEMEPKNHQDENNISEER). 2 stretches are compositionally biased toward polar residues: residues 14–27 (SSCSPNSKDLQSYS) and 244–259 (SESSPSQPPRGQTQGE). Over residues 416–428 (RNEEDKSGDESRS) the composition is skewed to basic and acidic residues. Positions 479 to 491 (SESSSYRSVSPDV) are enriched in low complexity. Polar residues predominate over residues 539–558 (QENTQMHTLNDLHSTNSSET). Basic and acidic residues-rich tracts occupy residues 559-569 (RPSDMESHGNK), 603-612 (TSVKDVHEEE), and 620-635 (MEPKNHQDENNISEER). Positions 666 to 704 (SMAKEELQKQLVEQVELRKKLEREFQNLKDSFQDQMKRE) form a coiled coil.

This sequence belongs to the SKI family.

The protein localises to the nucleus. In terms of biological role, may inhibit BMP signaling. This chain is SKI family transcriptional corepressor 1 homolog-B (skor1b), found in Danio rerio (Zebrafish).